Consider the following 167-residue polypeptide: Ribonuclease H (167 aa).

The RNase H type-1 domain maps to 1 to 143 (MYKQIEIFTD…CDQLARKAAK (143 aa)). Positions 10, 48, 70, and 135 each coordinate Mg(2+).

The protein belongs to the RNase H family. Monomer. The cofactor is Mg(2+).

Its subcellular location is the cytoplasm. It catalyses the reaction Endonucleolytic cleavage to 5'-phosphomonoester.. Endonuclease that specifically degrades the RNA of RNA-DNA hybrids. In Blochmanniella floridana, this protein is Ribonuclease H.